Reading from the N-terminus, the 396-residue chain is MSNDFLFTSESVSEGHPDKVADQISDAILDAILAQDKYARVAAETLCNTGLVVLAGEITTSANVDYIHVARETIKRIGYDNTDYGIDYKGCAVLVAYDKQSPDIAQGVDRASDDYLNQGAGDQGLMFGYACDETPELMPFPIYYAHRLVERQSQLRRDGRLPWLRPDAKSQVTVRYVNGKPHSVDTVVLSTQHAPEISQEQIREAVIEEIIKPVLPSHMLAETKYLVNPTGRFVIGGPQGDCGLTGRKIIVDTYGGAAPHGGGAFSGKDPSKVDRSAAYAARYVAKNVVAAGLARQCQVQVSYAIGVARPINITVYTEGTGVIPDEQIAKLVQEHFDLRPKGIVQMLDLLRPIYGKTAAYGHFGREEPEFSWEATDKAQLLREAAGLAGEPVKAFA.

An ATP-binding site is contributed by His16. Asp18 is a binding site for Mg(2+). Glu44 is a K(+) binding site. 2 residues coordinate L-methionine: Glu57 and Gln100. Positions Gln100–Arg110 are flexible loop. ATP contacts are provided by residues Asp167 to Lys169, Arg232 to Phe233, Asp241, Arg247 to Lys248, Ala264, and Lys268. Asp241 serves as a coordination point for L-methionine. L-methionine is bound at residue Lys272.

The protein belongs to the AdoMet synthase family. As to quaternary structure, homotetramer; dimer of dimers. Mg(2+) serves as cofactor. Requires K(+) as cofactor.

The protein resides in the cytoplasm. The enzyme catalyses L-methionine + ATP + H2O = S-adenosyl-L-methionine + phosphate + diphosphate. It functions in the pathway amino-acid biosynthesis; S-adenosyl-L-methionine biosynthesis; S-adenosyl-L-methionine from L-methionine: step 1/1. Catalyzes the formation of S-adenosylmethionine (AdoMet) from methionine and ATP. The overall synthetic reaction is composed of two sequential steps, AdoMet formation and the subsequent tripolyphosphate hydrolysis which occurs prior to release of AdoMet from the enzyme. This chain is S-adenosylmethionine synthase, found in Ralstonia nicotianae (strain ATCC BAA-1114 / GMI1000) (Ralstonia solanacearum).